Consider the following 267-residue polypeptide: DNA repair protein RecO (267 aa).

Belongs to the RecO family.

Involved in DNA repair and RecF pathway recombination. In Prochlorococcus marinus (strain MIT 9303), this protein is DNA repair protein RecO.